The sequence spans 582 residues: MFEPYLTTPLLLKAANTPHHIPKMSRICSDRPSTLVKYGNRVQPFPFPERQWPNKVLKTAPVLFSTDLRDGNQSLPNPMTFEQKLSLYKLLVSIGFKEIEVAYPCANQAEFDFVRHLIETPGLIPEDVLIQVITPCQEETIKRAVESVRGAKQAILFTYLPSSDNYRDTVLKISEDDWVERARWGAAYARSITKDSEDPVVRSTRWTFNFGFEDFANARIGAIIRCTEAVRAEWNPSKDEKMIIGVASSVEASTPNVFADQIECLSGNISNRDTVRLTVHTHNDRGGAVASAELASLAGADRIEGCLFGNGERAGNMDLVVYALNLLTQGIEPGIDLSRLDEIRKVYEDITELPVHPRTPYSGAYYLKAFSGAHQDAISKGLRLRTSATQEGKPCAVWPAWRVPYLPLDPADIGRSLDDVVGINSQSGKGGVAWVVNLGLGLDLPPGLARTFSKAVKERSIHFGREMSSDEVCMAFLEEYQVLRAADKSDDDMIQAVLRTESPLVAALGQVVGLSSLSASITSHTLADDVLSYAAYANVTPEESKPSLWGVGLGVSLQQAKLRAVVSALQVSDGSMSWVRLA.

The 281-residue stretch at 61 to 341 folds into the Pyruvate carboxyltransferase domain; it reads PVLFSTDLRD…EPGIDLSRLD (281 aa).

It belongs to the alpha-IPM synthase/homocitrate synthase family. LeuA type 2 subfamily.

It carries out the reaction 3-methyl-2-oxobutanoate + acetyl-CoA + H2O = (2S)-2-isopropylmalate + CoA + H(+). The protein operates within mycotoxin biosynthesis. In terms of biological role, isopropyl malate synthase; part of the gene clusters that mediate the biosynthesis of AM-toxins, host-selective toxins (HSTs) causing Alternaria blotch on apple, a worldwide distributed disease. AM-toxins are cyclic depsipeptides containing the 3 residues 2-hydroxy-isovaleric acid (2-HIV), dehydroalanine, L-alanine which are common for all 3 AM-toxins I to III. The fourth precursor is L-alpha-amino-methoxyphenyl-valeric acid (L-Amv) for AM-toxin I, L-alpha-amino-phenyl-valeric acid (L-Apv) for AM-toxin II, and L-alpha-amino-hydroxyphenyl-valeric acid (L-Ahv) for AM-toxin III. AM-toxins have two target sites for affecting susceptible apple cells; they cause invagination of the plasma membrane and electrolyte loss and chloroplast disorganization. The non-ribosomal peptide synthetase AMT1 contains 4 catalytic modules and is responsible for activation of each residue in AM-toxin. The aldo-keto reductase AMT2 catalyzes the conversion of 2-keto-isovaleric acid (2-KIV) to 2-hydroxy-isovaleric acid (2-HIV), one of the precursor residues incorporated by AMT1 during AM-toxin biosynthesis, by reduction of its ketone to an alcohol. The cytochrome P450 monooxygenase AMT3 and the thioesterase AMT4 are also important for AM-toxin production, but their exact function within the AM-toxin biosynthesis are not known yet. Up to 21 proteins (including AMT1 to AMT4) are predicted to be involved in AM-toxin biosynthesis since their expression ishighly up-regulated in AM-toxin-producing cultures. The chain is Isopropyl malate synthase AMT7 from Alternaria alternata (Alternaria rot fungus).